A 386-amino-acid polypeptide reads, in one-letter code: MIRDERVAAILAAGGSGVRAGLRKQWLELGGESVLRRAARALVACDAVDELVVVVPSGEEGRGLAEVEGLGRPARAIAGGAARADSVRNGARAAEGCGIVLVHDAARPFATPGLAARVAEAAARDGAALAALPVTDTVKRAAPRDGAPIVEATLDRRALWLAQTPQGFRRALLLEAFEAAGDRAAEATDECALVEALGAPVTLVPGEPGNFKITGPDDVARARSILEAPVAMGVGYDTHRFAEGRRLVLGGVEFEGDGLLGHSDADVCAHAIGDAILGGAGLGDLGRHFPDTDPRWKGVSSLALLREIAAKVAAAGFRVGNCDVTLAARRPKIAPRAEEMRARLAEALGVTPGQVNVKATTGEGMGFVGRGEGIAAHAVALLVRVR.

The interval 1–230 (MIRDERVAAI…RARSILEAPV (230 aa)) is 2-C-methyl-D-erythritol 4-phosphate cytidylyltransferase. The interval 231–386 (AMGVGYDTHR…HAVALLVRVR (156 aa)) is 2-C-methyl-D-erythritol 2,4-cyclodiphosphate synthase. A divalent metal cation contacts are provided by Asp-237 and His-239. Residues 237–239 (DTH) and 262–263 (HS) contribute to the 4-CDP-2-C-methyl-D-erythritol 2-phosphate site. His-270 is an a divalent metal cation binding site. 4-CDP-2-C-methyl-D-erythritol 2-phosphate is bound by residues 284–286 (DLG), 289–293 (FPDTD), 360–363 (TTGE), Phe-367, and Arg-370.

This sequence in the N-terminal section; belongs to the IspD/TarI cytidylyltransferase family. IspD subfamily. It in the C-terminal section; belongs to the IspF family. A divalent metal cation serves as cofactor.

It carries out the reaction 2-C-methyl-D-erythritol 4-phosphate + CTP + H(+) = 4-CDP-2-C-methyl-D-erythritol + diphosphate. It catalyses the reaction 4-CDP-2-C-methyl-D-erythritol 2-phosphate = 2-C-methyl-D-erythritol 2,4-cyclic diphosphate + CMP. It functions in the pathway isoprenoid biosynthesis; isopentenyl diphosphate biosynthesis via DXP pathway; isopentenyl diphosphate from 1-deoxy-D-xylulose 5-phosphate: step 2/6. It participates in isoprenoid biosynthesis; isopentenyl diphosphate biosynthesis via DXP pathway; isopentenyl diphosphate from 1-deoxy-D-xylulose 5-phosphate: step 4/6. Functionally, bifunctional enzyme that catalyzes the formation of 4-diphosphocytidyl-2-C-methyl-D-erythritol from CTP and 2-C-methyl-D-erythritol 4-phosphate (MEP) (IspD), and catalyzes the conversion of 4-diphosphocytidyl-2-C-methyl-D-erythritol 2-phosphate (CDP-ME2P) to 2-C-methyl-D-erythritol 2,4-cyclodiphosphate (ME-CPP) with a corresponding release of cytidine 5-monophosphate (CMP) (IspF). The chain is Bifunctional enzyme IspD/IspF from Anaeromyxobacter sp. (strain Fw109-5).